A 179-amino-acid chain; its full sequence is Large ribosomal subunit protein uL5 (179 aa).

This sequence belongs to the universal ribosomal protein uL5 family. As to quaternary structure, part of the 50S ribosomal subunit; part of the 5S rRNA/L5/L18/L25 subcomplex. Contacts the 5S rRNA and the P site tRNA. Forms a bridge to the 30S subunit in the 70S ribosome.

In terms of biological role, this is one of the proteins that bind and probably mediate the attachment of the 5S RNA into the large ribosomal subunit, where it forms part of the central protuberance. In the 70S ribosome it contacts protein S13 of the 30S subunit (bridge B1b), connecting the 2 subunits; this bridge is implicated in subunit movement. Contacts the P site tRNA; the 5S rRNA and some of its associated proteins might help stabilize positioning of ribosome-bound tRNAs. The chain is Large ribosomal subunit protein uL5 from Methylococcus capsulatus (strain ATCC 33009 / NCIMB 11132 / Bath).